The chain runs to 127 residues: Fluoride-specific ion channel FluC (127 aa).

The next 4 helical transmembrane spans lie at 4–24, 35–55, 71–91, and 103–123; these read TLLA…QLGV, LGTL…LAFF, TGLC…VMFL, and VLLN…LVTW. Residues Gly-75 and Thr-78 each contribute to the Na(+) site.

It belongs to the fluoride channel Fluc/FEX (TC 1.A.43) family.

The protein localises to the cell inner membrane. The catalysed reaction is fluoride(in) = fluoride(out). Na(+) is not transported, but it plays an essential structural role and its presence is essential for fluoride channel function. In terms of biological role, fluoride-specific ion channel. Important for reducing fluoride concentration in the cell, thus reducing its toxicity. The protein is Fluoride-specific ion channel FluC of Pectobacterium atrosepticum (strain SCRI 1043 / ATCC BAA-672) (Erwinia carotovora subsp. atroseptica).